We begin with the raw amino-acid sequence, 156 residues long: MSMVVYNNQGGEEGNPFAGALTEFSQWLWSRPLGNPGAEDVEEEAIAAQEELEFPEDEAQARHSCLQRTTSWATPKEVSPSGRVYQTVRLSRMEYSRPTMSIRSQASYFSSSARPLPPPPAPSLMSWTPIAKYHPSSPTSTSSKLRRAAPKLIKRG.

The interval Ala-38–Phe-54 is homodimerization. Positions Asp-57–Gly-156 are RNA-binding. Ser-71, Ser-79, Ser-137, and Ser-140 each carry phosphoserine. Positions Ala-106–Gly-156 are disordered. Positions Lys-144 to Gly-156 are enriched in basic residues.

It belongs to the polerovirus movement protein family. As to quaternary structure, homodimer. Post-translationally, expressed as a nonphosphorylated 20kDa form and a phosphorylated 22kDa form. Phosphorylated by a host PKC-related kinase. Serine phosphorylation is required for plamodesma targeting.

The protein resides in the host cell junction. It localises to the host plasmodesma. It is found in the host chloroplast envelope. The protein localises to the host Golgi apparatus. Its subcellular location is the host mitochondrion outer membrane. Together with movement protein P3a, facilitates long-distance movement of virions in host. Transports viral genome to neighboring plant cells directly through plasmosdesmata, without any budding. The movement protein allows efficient cell to cell propagation, by bypassing the host cell wall barrier. Binds ssRNA. This chain is Movement protein P17, found in Solanum tuberosum (Potato).